The sequence spans 406 residues: Cysteine desulfurase (406 aa).

Residue Lys-226 is modified to N6-(pyridoxal phosphate)lysine. Catalysis depends on Cys-364, which acts as the Cysteine persulfide intermediate.

The protein belongs to the class-V pyridoxal-phosphate-dependent aminotransferase family. Csd subfamily. Homodimer. Interacts with SufE and the SufBCD complex composed of SufB, SufC and SufD. The interaction with SufE is required to mediate the direct transfer of the sulfur atom from the S-sulfanylcysteine. The cofactor is pyridoxal 5'-phosphate.

It localises to the cytoplasm. The catalysed reaction is (sulfur carrier)-H + L-cysteine = (sulfur carrier)-SH + L-alanine. It catalyses the reaction L-selenocysteine + AH2 = hydrogenselenide + L-alanine + A + H(+). It functions in the pathway cofactor biosynthesis; iron-sulfur cluster biosynthesis. Cysteine desulfurases mobilize the sulfur from L-cysteine to yield L-alanine, an essential step in sulfur metabolism for biosynthesis of a variety of sulfur-containing biomolecules. Component of the suf operon, which is activated and required under specific conditions such as oxidative stress and iron limitation. Acts as a potent selenocysteine lyase in vitro, that mobilizes selenium from L-selenocysteine. Selenocysteine lyase activity is however unsure in vivo. The protein is Cysteine desulfurase of Escherichia coli O6:K15:H31 (strain 536 / UPEC).